The sequence spans 390 residues: Endothelial cell-selective adhesion molecule (390 aa).

The signal sequence occupies residues 1-29 (MISLPGPLVTNLLRFLFLGLSALAPPSRA). An Ig-like V-type domain is found at 30 to 143 (ELQLHLPANQ…NGQASGHSIK (114 aa)). Over 30–248 (ELQLHLPANQ…LEVSTGPGAA (219 aa)) the chain is Extracellular. Residues N108, N169, N213, and N236 are each glycosylated (N-linked (GlcNAc...) asparagine). The 87-residue stretch at 156–242 (PSCRLQGVPR…AQCNVTLEVS (87 aa)) folds into the Ig-like C2-type domain. C174 and C224 are disulfide-bonded. The chain crosses the membrane as a helical span at residues 249–269 (VVAGAVVGTLVGLGLLAGLVL). The Cytoplasmic segment spans residues 270–390 (LYHRRGKALE…PAQSQAGSLV (121 aa)). Position 301 is a phosphoserine (S301). A disordered region spans residues 316 to 365 (ARALRPPHGPPRPGALTPTPSLSSQALPSPRLPTTDGANPQPISLIPGGV). T332 and T334 each carry phosphothreonine. Residues 333–342 (PTPSLSSQAL) are compositionally biased toward polar residues. S336, S339, S344, and S371 each carry phosphoserine.

In terms of assembly, interacts with MAGI1.

Its subcellular location is the cell junction. It is found in the adherens junction. It localises to the tight junction. The protein resides in the cell membrane. Functionally, can mediate aggregation most likely through a homophilic molecular interaction. This is Endothelial cell-selective adhesion molecule (ESAM) from Macaca fascicularis (Crab-eating macaque).